We begin with the raw amino-acid sequence, 240 residues long: 7-cyano-7-deazaguanine synthase (240 aa).

14–24 (FSGGQDSATCL) contributes to the ATP binding site. Cysteine 202, cysteine 217, cysteine 220, and cysteine 223 together coordinate Zn(2+).

This sequence belongs to the QueC family. The cofactor is Zn(2+).

It catalyses the reaction 7-carboxy-7-deazaguanine + NH4(+) + ATP = 7-cyano-7-deazaguanine + ADP + phosphate + H2O + H(+). It participates in purine metabolism; 7-cyano-7-deazaguanine biosynthesis. In terms of biological role, catalyzes the ATP-dependent conversion of 7-carboxy-7-deazaguanine (CDG) to 7-cyano-7-deazaguanine (preQ(0)). The protein is 7-cyano-7-deazaguanine synthase of Rhodopseudomonas palustris (strain BisB18).